The chain runs to 504 residues: Anaerobic nitric oxide reductase transcription regulator NorR (504 aa).

A 4-aspartylphosphate modification is found at D57. The Sigma-54 factor interaction domain occupies M187–V416. ATP-binding positions include G215–E222 and A278–E287. The H-T-H motif DNA-binding region spans W479–K498.

It functions in the pathway nitrogen metabolism; nitric oxide reduction. Its function is as follows. Required for the expression of anaerobic nitric oxide (NO) reductase, acts as a transcriptional activator for at least the norVW operon. Activation also requires sigma-54. This is Anaerobic nitric oxide reductase transcription regulator NorR from Escherichia coli (strain ATCC 8739 / DSM 1576 / NBRC 3972 / NCIMB 8545 / WDCM 00012 / Crooks).